The chain runs to 1129 residues: Ubiquitin carboxyl-terminal hydrolase 7 (1129 aa).

The 141-residue stretch at 29–169 (EGHLALDIER…DDVIRLRCRF (141 aa)) folds into the MATH domain. The USP domain maps to 190–500 (IGLRNQGATC…SAYMLVYVRD (311 aa)). Cys199 serves as the catalytic Nucleophile. His439 serves as the catalytic Proton acceptor.

Belongs to the peptidase C19 family.

Its subcellular location is the nucleus. It catalyses the reaction Thiol-dependent hydrolysis of ester, thioester, amide, peptide and isopeptide bonds formed by the C-terminal Gly of ubiquitin (a 76-residue protein attached to proteins as an intracellular targeting signal).. Its function is as follows. Hydrolase that deubiquitinates target proteins. This Caenorhabditis briggsae protein is Ubiquitin carboxyl-terminal hydrolase 7.